Here is a 534-residue protein sequence, read N- to C-terminus: Ankyrin repeat and LEM domain-containing protein 1 (534 aa).

4 ANK repeats span residues 4–35 (TACLALRLLAALREEEARAVEELLRLGADPNL), 39–71 (DGAAAVHLAARASHPRALHCLRMLLRWGADPNA), 75–104 (EGLTPVHVAAAWGCCGALELLLSRGGDPTL), and 108–137 (DGLRPLDWALQQRHHNCARVLQELDTPTQP). Residues 279-323 (HSSVPPMSDLQLLQALRALGYSPGPVTPFTRGHYLRRLQEAQASR) enclose the LEM domain. Positions 370-485 (KSSFTYLLLD…ALGLQTLTNQ (116 aa)) constitute a GIY-YIG domain. A Nuclear localization signal motif is present at residues 498 to 505 (PPSRRRRL).

As to quaternary structure, interacts (via LEM domain) with BANF1; the interaction may favor BANF1 dimerization. In terms of tissue distribution, predominantly expressed in bone marrow, spleen, thymus, colon and ovary. Expressed also to a lesser extent in lymph nodes, liver and testis.

Its subcellular location is the cytoplasm. The protein localises to the nucleus. Its function is as follows. Endonuclease that probably plays a role in the DNA damage response and DNA repair. The sequence is that of Ankyrin repeat and LEM domain-containing protein 1 from Mus musculus (Mouse).